The chain runs to 33 residues: Large ribosomal subunit protein uL24 (33 aa).

Belongs to the universal ribosomal protein uL24 family. In terms of assembly, component of the large ribosomal subunit.

It is found in the cytoplasm. Its function is as follows. Component of the large ribosomal subunit. The ribosome is a large ribonucleoprotein complex responsible for the synthesis of proteins in the cell. The protein is Large ribosomal subunit protein uL24 (rpl26) of Xenopus laevis (African clawed frog).